Reading from the N-terminus, the 253-residue chain is Imidazole glycerol phosphate synthase subunit HisF (253 aa).

Catalysis depends on residues Asp-11 and Asp-130.

Belongs to the HisA/HisF family. Heterodimer of HisH and HisF.

The protein localises to the cytoplasm. The enzyme catalyses 5-[(5-phospho-1-deoxy-D-ribulos-1-ylimino)methylamino]-1-(5-phospho-beta-D-ribosyl)imidazole-4-carboxamide + L-glutamine = D-erythro-1-(imidazol-4-yl)glycerol 3-phosphate + 5-amino-1-(5-phospho-beta-D-ribosyl)imidazole-4-carboxamide + L-glutamate + H(+). The protein operates within amino-acid biosynthesis; L-histidine biosynthesis; L-histidine from 5-phospho-alpha-D-ribose 1-diphosphate: step 5/9. Functionally, IGPS catalyzes the conversion of PRFAR and glutamine to IGP, AICAR and glutamate. The HisF subunit catalyzes the cyclization activity that produces IGP and AICAR from PRFAR using the ammonia provided by the HisH subunit. The protein is Imidazole glycerol phosphate synthase subunit HisF of Ruegeria sp. (strain TM1040) (Silicibacter sp.).